Consider the following 177-residue polypeptide: FANCD2 opposite strand protein (177 aa).

The polypeptide is FANCD2 opposite strand protein (FANCD2OS) (Homo sapiens (Human)).